Consider the following 137-residue polypeptide: Peptide methionine sulfoxide reductase MsrB (137 aa).

The region spanning 7 to 129 (PDHPATELNE…NSASLSFTDG (123 aa)) is the MsrB domain. The Zn(2+) site is built by cysteine 46, cysteine 49, cysteine 95, and cysteine 98. Residue cysteine 118 is the Nucleophile of the active site.

The protein belongs to the MsrB Met sulfoxide reductase family. It depends on Zn(2+) as a cofactor.

It carries out the reaction L-methionyl-[protein] + [thioredoxin]-disulfide + H2O = L-methionyl-(R)-S-oxide-[protein] + [thioredoxin]-dithiol. This Serratia proteamaculans (strain 568) protein is Peptide methionine sulfoxide reductase MsrB.